A 110-amino-acid chain; its full sequence is Protein P2 (110 aa).

Residues 72-82 (KLPTTSGSSSA) show a composition bias toward polar residues. The interval 72-110 (KLPTTSGSSSAGAIVPAGSNTQGQYKAPPKKGIKRKYPA) is disordered. The span at 99 to 110 (PPKKGIKRKYPA) shows a compositional bias: basic residues.

The polypeptide is Protein P2 (Oryza sativa (Rice)).